Reading from the N-terminus, the 213-residue chain is Histone H1.2 (213 aa).

Positions 1–17 (MSETAPAAPAAAPPAEK) are enriched in low complexity. The segment at 1-41 (MSETAPAAPAAAPPAEKAPVKKKAAKKAGGTPRKASGPPVS) is disordered. Ser-2 carries the post-translational modification N-acetylserine; partial. Ser-2 carries the phosphoserine modification. N6-acetyllysine is present on Lys-17. N6-(2-hydroxyisobutyryl)lysine occurs at positions 23, 26, and 27. Lys-34 bears the N6-(beta-hydroxybutyryl)lysine; alternate mark. Lys-34 carries the post-translational modification N6-crotonyllysine; alternate. Lys-34 carries the N6-methyllysine; alternate modification. The 74-residue stretch at 36–109 (SGPPVSELIT…GASGSFKLNK (74 aa)) folds into the H15 domain. Lys-46 carries the N6-(2-hydroxyisobutyryl)lysine modification. An N6-(beta-hydroxybutyryl)lysine; alternate modification is found at Lys-52. At Lys-52 the chain carries N6-(2-hydroxyisobutyryl)lysine; alternate. Arg-54 bears the Citrulline mark. Residue Lys-63 is modified to N6-(2-hydroxyisobutyryl)lysine. Lys-64 is modified (N6-(beta-hydroxybutyryl)lysine; alternate). The residue at position 64 (Lys-64) is an N6-crotonyllysine; alternate. N6-(2-hydroxyisobutyryl)lysine; alternate is present on Lys-64. Residues Lys-75 and Lys-81 each carry the N6-(2-hydroxyisobutyryl)lysine modification. Lys-85 and Lys-90 each carry N6-(beta-hydroxybutyryl)lysine; alternate. Residues Lys-85, Lys-90, and Lys-97 each carry the N6-crotonyllysine; alternate modification. N6-(2-hydroxyisobutyryl)lysine; alternate occurs at positions 85, 90, and 97. Residues 92–213 (TLVQTKGTGA…KPKKAAPKKK (122 aa)) are disordered. Lys-97 is modified (N6-succinyllysine; alternate). Position 104 is a phosphoserine; by PKC (Ser-104). Lys-106 is subject to N6-(beta-hydroxybutyryl)lysine. N6-(2-hydroxyisobutyryl)lysine is present on residues Lys-110, Lys-117, Lys-121, Lys-129, and Lys-136. A compositionally biased stretch (basic residues) spans 119 to 140 (KVKKAGGTKPKKPVGAAKKPKK). Thr-146 is modified (phosphothreonine). Lys-148 is modified (N6-(2-hydroxyisobutyryl)lysine). Positions 149–160 (KSAKKTPKKAKK) are enriched in basic residues. 2 positions are modified to N6-crotonyllysine; alternate: Lys-159 and Lys-168. N6-(2-hydroxyisobutyryl)lysine; alternate occurs at positions 159 and 168. Basic residues predominate over residues 169-186 (KVAKSPKKAKVAKPKKAA). At Lys-187 the chain carries N6-methyllysine; by EHMT1 and EHMT2. ADP-ribosylserine is present on Ser-188. A compositionally biased stretch (basic residues) spans 193 to 213 (VKPKAAKPKVVKPKKAAPKKK). Lys-213 carries the N6-(2-hydroxyisobutyryl)lysine modification.

Belongs to the histone H1/H5 family. Interacts with TSC22D1 isoforms 2 and 5. H1 histones are progressively phosphorylated during the cell cycle, becoming maximally phosphorylated during late G2 phase and M phase, and being dephosphorylated sharply thereafter. Post-translationally, crotonylation (Kcr) is specifically present in male germ cells and marks testis-specific genes in post-meiotic cells, including X-linked genes that escape sex chromosome inactivation in haploid cells. Crotonylation marks active promoters and enhancers and confers resistance to transcriptional repressors. It is also associated with post-meiotically activated genes on autosomes. In terms of processing, citrullination at Arg-54 (H1R54ci) by PADI4 takes place within the DNA-binding site of H1 and results in its displacement from chromatin and global chromatin decondensation, thereby promoting pluripotency and stem cell maintenance. ADP-ribosylated on Ser-188 in response to DNA damage.

Its subcellular location is the nucleus. It localises to the chromosome. Its function is as follows. Histone H1 protein binds to linker DNA between nucleosomes forming the macromolecular structure known as the chromatin fiber. Histones H1 are necessary for the condensation of nucleosome chains into higher-order structured fibers. Also acts as a regulator of individual gene transcription through chromatin remodeling, nucleosome spacing and DNA methylation. The polypeptide is Histone H1.2 (Homo sapiens (Human)).